We begin with the raw amino-acid sequence, 546 residues long: Sterol O-acyltransferase 1 (546 aa).

Residue methionine 1 is modified to N-acetylmethionine. Positions 1 to 37 are disordered; that stretch reads MVGEEKMSLRNRLSKSGENPEQDEAQRSVSDTQSNGR. Residues 1 to 134 are Cytoplasmic-facing; sequence MVGEEKMSLR…LDELFEVDHI (134 aa). The residue at position 8 (serine 8) is a Phosphoserine. Residues 27–37 show a composition bias toward polar residues; it reads RSVSDTQSNGR. Histidine 133 serves as a coordination point for cholesterol. A helical transmembrane segment spans residues 135–156; it reads RTIYHMFIGLLILFILSTLVVD. Topologically, residues 157 to 176 are lumenal; that stretch reads YIDEGRLVLEFNLLGYAFGK. The helical transmembrane segment at 177–202 threads the bilayer; the sequence is LPTVIWTWWAMFLSTLSIPYFLFQRW. The Cytoplasmic segment spans residues 203-214; the sequence is AHGYSKTSHPLI. The chain crosses the membrane as a helical span at residues 215–240; it reads YSLSHGFFFLVFQLGILGFVPTYVVL. Over 241-248 the chain is Lumenal; sequence AYTLPPAS. A helical membrane pass occupies residues 249–272; sequence RFIVILEQIRMVMKAHSFVRENVP. Over 273 to 315 the chain is Cytoplasmic; the sequence is RVLNAAKEKSSTVPVPTVNQYLYFLFAPTLIYRDSYPRTPTVR. The helical transmembrane segment at 316–348 threads the bilayer; it reads WGYVAVQFLQVFGCLFYVYYIFERLCAPLFRNI. Residues 349–365 lie on the Lumenal side of the membrane; sequence KQEPFSARVLVLCVFNS. The helical transmembrane segment at 366–391 threads the bilayer; it reads ILPGVLMLFLTFFAFLHCWLNAFAEM. At 392–439 the chain is on the cytoplasmic side; sequence LRFGDRMFYKDWWNSTSYSNYYRTWNVVVHDWLYYYAYKDLLWFFSKR. Residues 399–405 carry the FYXDWWN motif motif; it reads FYKDWWN. Residues asparagine 411, arginine 414, asparagine 417, histidine 421, tyrosine 429, lysine 441, and serine 452 each contribute to the an acyl-CoA site. Residues 440–464 form a helical membrane-spanning segment; it reads FKSAAMLAVFALSAVVHEYALAVCL. Residue histidine 456 is part of the active site. Residues 465-470 lie on the Lumenal side of the membrane; the sequence is SYFYPV. The chain crosses the membrane as a helical span at residues 471-486; that stretch reads LFVLFMFFGMAFNFIV. At 487-492 the chain is on the cytoplasmic side; the sequence is NDSRKR. The helical transmembrane segment at 493–524 threads the bilayer; sequence PIWNIMVWASLFLGHGVILCFYSQEWYARQHC. Cysteine 524 and cysteine 542 are oxidised to a cystine. Topologically, residues 525–546 are lumenal; the sequence is PLKNPTFLDYVRPRSWTCQYVF.

Belongs to the membrane-bound acyltransferase family. Sterol o-acyltransferase subfamily. As to quaternary structure, may form homo- or heterodimers. Interacts with UBIAD1.

The protein resides in the endoplasmic reticulum membrane. It carries out the reaction a sterol + a long-chain fatty acyl-CoA = a long-chain 3-hydroxysterol ester + CoA. It catalyses the reaction cholesterol + an acyl-CoA = a cholesterol ester + CoA. The catalysed reaction is cholesterol + (9Z)-octadecenoyl-CoA = cholesteryl (9Z-octadecenoate) + CoA. The enzyme catalyses cholesterol + hexadecanoyl-CoA = cholesteryl hexadecanoate + CoA. It carries out the reaction octadecanoyl-CoA + cholesterol = cholesteryl octadecanoate + CoA. It catalyses the reaction (9Z,12Z)-octadecadienoyl-CoA + cholesterol = cholesteryl (9Z,12Z)-octadecadienoate + CoA. The catalysed reaction is (5Z,8Z,11Z,14Z)-eicosatetraenoyl-CoA + cholesterol = cholesteryl (5Z,8Z,11Z,14Z)-eicosatetraenoate + CoA. The enzyme catalyses (9Z)-hexadecenoyl-CoA + cholesterol = cholesteryl (9Z)-hexadecenoate + CoA. It carries out the reaction (11Z)-octadecenoyl-CoA + cholesterol = cholesteryl (11Z)-octadecenoate + CoA. It catalyses the reaction (7Z)-octadecenoyl-CoA + cholesterol = cholesteryl (7Z)-octadecenoate + CoA. Functionally, catalyzes the formation of fatty acid-cholesterol esters, which are less soluble in membranes than cholesterol. Plays a role in lipoprotein assembly and dietary cholesterol absorption. Preferentially utilizes oleoyl-CoA ((9Z)-octadecenoyl-CoA) as a substrate: shows a higher activity towards an acyl-CoA substrate with a double bond at the delta-9 position (9Z) than towards saturated acyl-CoA or an unsaturated acyl-CoA with a double bond at the delta-7 (7Z) or delta-11 (11Z) positions. This is Sterol O-acyltransferase 1 (SOAT1) from Cricetulus griseus (Chinese hamster).